The primary structure comprises 286 residues: CDP-diacylglycerol--serine O-phosphatidyltransferase (286 aa).

A run of 5 helical transmembrane segments spans residues 15 to 35, 95 to 115, 135 to 155, 167 to 187, and 207 to 227; these read ILPS…IKFA, MLSK…CVVL, EFFV…LLAL, VWFL…GIPM, and LAIC…VIII.

It belongs to the CDP-alcohol phosphatidyltransferase class-I family.

Its subcellular location is the cell membrane. The enzyme catalyses a CDP-1,2-diacyl-sn-glycerol + L-serine = a 1,2-diacyl-sn-glycero-3-phospho-L-serine + CMP + H(+). This is CDP-diacylglycerol--serine O-phosphatidyltransferase (pssA) from Mycobacterium bovis (strain ATCC BAA-935 / AF2122/97).